The chain runs to 835 residues: Leucine--tRNA ligase (835 aa).

The short motif at proline 44 to histidine 54 is the 'HIGH' region element. The short motif at lysine 587–serine 591 is the 'KMSKS' region element. Lysine 590 is an ATP binding site.

This sequence belongs to the class-I aminoacyl-tRNA synthetase family.

The protein resides in the cytoplasm. It carries out the reaction tRNA(Leu) + L-leucine + ATP = L-leucyl-tRNA(Leu) + AMP + diphosphate. The chain is Leucine--tRNA ligase from Lawsonia intracellularis (strain PHE/MN1-00).